A 329-amino-acid polypeptide reads, in one-letter code: N-acetyl-gamma-glutamyl-phosphate reductase (329 aa).

The active site involves C155.

The protein belongs to the NAGSA dehydrogenase family. Type 1 subfamily.

It localises to the cytoplasm. The enzyme catalyses N-acetyl-L-glutamate 5-semialdehyde + phosphate + NADP(+) = N-acetyl-L-glutamyl 5-phosphate + NADPH + H(+). It participates in amino-acid biosynthesis; L-arginine biosynthesis; N(2)-acetyl-L-ornithine from L-glutamate: step 3/4. Catalyzes the NADPH-dependent reduction of N-acetyl-5-glutamyl phosphate to yield N-acetyl-L-glutamate 5-semialdehyde. This chain is N-acetyl-gamma-glutamyl-phosphate reductase, found in Shewanella piezotolerans (strain WP3 / JCM 13877).